A 114-amino-acid polypeptide reads, in one-letter code: Nucleoid-associated protein Amet_4780 (114 aa).

Residues 23–42 are disordered; sequence QKMQKDMEKTQAALEEKEVE. The span at 25 to 42 shows a compositional bias: basic and acidic residues; it reads MQKDMEKTQAALEEKEVE.

It belongs to the YbaB/EbfC family. As to quaternary structure, homodimer.

The protein resides in the cytoplasm. The protein localises to the nucleoid. Its function is as follows. Binds to DNA and alters its conformation. May be involved in regulation of gene expression, nucleoid organization and DNA protection. The chain is Nucleoid-associated protein Amet_4780 from Alkaliphilus metalliredigens (strain QYMF).